Reading from the N-terminus, the 178-residue chain is 2-oxo-4-hydroxy-4-carboxy-5-ureidoimidazoline decarboxylase (178 aa).

Residue histidine 67 is the Proton donor of the active site. Substrate is bound by residues proline 68, 84–88 (SQREQ), and 119–123 (FVLAA).

The protein belongs to the OHCU decarboxylase family.

The protein resides in the peroxisome. The enzyme catalyses 5-hydroxy-2-oxo-4-ureido-2,5-dihydro-1H-imidazole-5-carboxylate + H(+) = (S)-allantoin + CO2. Its pathway is purine metabolism; urate degradation; (S)-allantoin from urate: step 3/3. Functionally, catalyzes the stereoselective decarboxylation of 2-oxo-4-hydroxy-4-carboxy-5-ureidoimidazoline (OHCU) to (S)-allantoin. The chain is 2-oxo-4-hydroxy-4-carboxy-5-ureidoimidazoline decarboxylase (Urad) from Mus musculus (Mouse).